The sequence spans 179 residues: Large ribosomal subunit protein uL5 (179 aa).

Belongs to the universal ribosomal protein uL5 family. In terms of assembly, part of the 50S ribosomal subunit; part of the 5S rRNA/L5/L18/L25 subcomplex. Contacts the 5S rRNA and the P site tRNA. Forms a bridge to the 30S subunit in the 70S ribosome.

Functionally, this is one of the proteins that bind and probably mediate the attachment of the 5S RNA into the large ribosomal subunit, where it forms part of the central protuberance. In the 70S ribosome it contacts protein S13 of the 30S subunit (bridge B1b), connecting the 2 subunits; this bridge is implicated in subunit movement. Contacts the P site tRNA; the 5S rRNA and some of its associated proteins might help stabilize positioning of ribosome-bound tRNAs. This chain is Large ribosomal subunit protein uL5, found in Shewanella putrefaciens (strain CN-32 / ATCC BAA-453).